A 163-amino-acid polypeptide reads, in one-letter code: ADP-ribosylation factor-like protein 2-binding protein (163 aa).

Belongs to the ARL2BP family. As to quaternary structure, found in a complex with ARL2BP, ARL2 and SLC25A6. Found in a complex with ARL2, ARL2BP and SLC25A4. Interacts with STAT2, STAT3 and STAT4. Interacts with GTP-bound ARL2 and ARL3; the complex ARL2-ARL2BP as well as ARL2BP alone, binds to SLC25A4. Interaction with ARL2 may be required for targeting to cilia basal body. Interacts with STAT3; interaction is enhanced with ARL2. Expressed in retina pigment epithelial cells (at protein level). Widely expressed.

Its subcellular location is the cytoplasm. It is found in the mitochondrion intermembrane space. It localises to the cytoskeleton. The protein resides in the microtubule organizing center. The protein localises to the centrosome. Its subcellular location is the nucleus. It is found in the spindle. It localises to the cilium basal body. Functionally, together with ARL2, plays a role in the nuclear translocation, retention and transcriptional activity of STAT3. May play a role as an effector of ARL2. This chain is ADP-ribosylation factor-like protein 2-binding protein (ARL2BP), found in Homo sapiens (Human).